A 191-amino-acid chain; its full sequence is Leucyl/phenylalanyl-tRNA--protein transferase (191 aa).

It belongs to the L/F-transferase family.

Its subcellular location is the cytoplasm. It catalyses the reaction N-terminal L-lysyl-[protein] + L-leucyl-tRNA(Leu) = N-terminal L-leucyl-L-lysyl-[protein] + tRNA(Leu) + H(+). It carries out the reaction N-terminal L-arginyl-[protein] + L-leucyl-tRNA(Leu) = N-terminal L-leucyl-L-arginyl-[protein] + tRNA(Leu) + H(+). The enzyme catalyses L-phenylalanyl-tRNA(Phe) + an N-terminal L-alpha-aminoacyl-[protein] = an N-terminal L-phenylalanyl-L-alpha-aminoacyl-[protein] + tRNA(Phe). Functions in the N-end rule pathway of protein degradation where it conjugates Leu, Phe and, less efficiently, Met from aminoacyl-tRNAs to the N-termini of proteins containing an N-terminal arginine or lysine. The sequence is that of Leucyl/phenylalanyl-tRNA--protein transferase from Herpetosiphon aurantiacus (strain ATCC 23779 / DSM 785 / 114-95).